The following is a 116-amino-acid chain: Non-specific lipid-transfer protein D, cotyledon-specific isoform (116 aa).

A signal peptide spans 1–24 (MKNIFFSVFFLLSFLLCLANVSEA). Cystine bridges form between cysteine 28–cysteine 76, cysteine 38–cysteine 53, cysteine 54–cysteine 98, and cysteine 74–cysteine 112.

This sequence belongs to the plant LTP family.

Plant non-specific lipid-transfer proteins transfer phospholipids as well as galactolipids across membranes. May play a role in wax or cutin deposition in the cell walls of expanding epidermal cells and certain secretory tissues. The sequence is that of Non-specific lipid-transfer protein D, cotyledon-specific isoform from Ricinus communis (Castor bean).